We begin with the raw amino-acid sequence, 133 residues long: MKYLILSLVANLLVFGVLSAIGLNINILAAMMMILVIPITISGILFFKTNLDKTYIFFNILFIDFYYYIYNVHLMALPRFNSYIKAEMMELEDIDVLITSKDFGFDEILFFTLYLLLILIILYYLKKQVKTKS.

The next 4 membrane-spanning stretches (helical) occupy residues 3-23 (YLILSLVANLLVFGVLSAIGL), 27-47 (ILAAMMMILVIPITISGILFF), 55-75 (YIFFNILFIDFYYYIYNVHLM), and 103-123 (FGFDEILFFTLYLLLILIILY).

The protein resides in the cell membrane. In terms of biological role, accessory element involved in the expression of sarA and several virulence factors. Modulates SarA production and/or function in a strain-dependent manner. Affects the transcription of the accessory gene regulator (agr) and genes encoding virulence factors including alpha toxin (hla) and protein A (spa). The protein is Protein msa (msa) of Staphylococcus aureus (strain bovine RF122 / ET3-1).